Reading from the N-terminus, the 172-residue chain is Austinoid biosynthesis clusters protein J (172 aa).

This sequence belongs to the trt14 isomerase family. In terms of assembly, homodimer.

It participates in secondary metabolite biosynthesis; terpenoid biosynthesis. In terms of biological role, part of the gene cluster B that mediates the biosynthesis of the fungal meroterpenoid acetoxydehydroaustin. The first step of the pathway is the synthesis of 3,5-dimethylorsellinic acid by the polyketide synthase ausA. 3,5-dimethylorsellinic acid is then prenylated by the polyprenyl transferase ausN. Further epoxidation by the FAD-dependent monooxygenase ausM and cyclization by the probable terpene cyclase ausL lead to the formation of protoaustinoid A. Protoaustinoid A is then oxidized to spiro-lactone preaustinoid A3 by the combined action of the FAD-binding monooxygenases ausB and ausC, and the dioxygenase ausE. Acid-catalyzed keto-rearrangement and ring contraction of the tetraketide portion of preaustinoid A3 by ausJ lead to the formation of preaustinoid A4. The aldo-keto reductase ausK, with the help of ausH, is involved in the next step by transforming preaustinoid A4 into isoaustinone which is in turn hydroxylated by the P450 monooxygenase ausI to form austinolide. The cytochrome P450 monooxygenase ausG then modifies austinolide to austinol. Austinol is further acetylated to austin by the O-acetyltransferase ausP, which spontaneously changes to dehydroaustin. The cytochrome P450 monooxygenase then converts dehydroaustin is into 7-dehydrodehydroaustin. The hydroxylation catalyzed by ausR permits the second O-acetyltransferase ausQ to add an additional acetyl group to the molecule, leading to the formation of acetoxydehydroaustin. Due to genetic rearrangements of the clusters and the subsequent loss of some enzymes, the end product of the Penicillium brasilianum austinoid biosynthesis clusters is acetoxydehydroaustin. The chain is Austinoid biosynthesis clusters protein J from Penicillium brasilianum.